Consider the following 471-residue polypeptide: uncharacterized protein (471 aa).

Residues 13 to 57 form a disordered region; that stretch reads KGGATIGATPMESDSSVSALSGSSASKVSRRGRRRSHLASKSSAP. Residues 27 to 39 show a composition bias toward low complexity; the sequence is SSVSALSGSSASK. Positions 40–50 are enriched in basic residues; that stretch reads VSRRGRRRSHL. 2 consecutive CCHC-type zinc fingers follow at residues 397-414 and 417-434; these read YACH…ECRQ and SVCR…KCQN. The interval 438 to 457 is gag-like cysteine motif; that stretch reads CRNCRHRGQPSGHYMLSNAC.

The protein to corresponding ORF of B.mori (R1BM).

This is an uncharacterized protein from Drosophila melanogaster (Fruit fly).